We begin with the raw amino-acid sequence, 78 residues long: Toxin OAIP 5 (78 aa).

Positions 1–19 are cleaved as a signal peptide; it reads MLIVILTCALLVIYHAAAA. A propeptide spanning residues 20–40 is cleaved from the precursor; the sequence is EELEAKDVIESKALATLDEER. Cystine bridges form between C43/C56, C47/C70, and C64/C75.

Belongs to the neurotoxin 12 (Hwtx-2) family. 05 (OAIP-5) subfamily. In terms of tissue distribution, expressed by the venom gland.

It localises to the secreted. Probable ion channel inhibitor. Shows insecticidal activity when injected into mealworms. In Selenotypus plumipes (Australian featherleg tarantula), this protein is Toxin OAIP 5.